We begin with the raw amino-acid sequence, 897 residues long: Chromodomain-helicase-DNA-binding protein 1-like (897 aa).

Position 9 is an omega-N-methylarginine (R9). In terms of domain architecture, Helicase ATP-binding spans A58–D223. D71 to T78 contributes to the ATP binding site. Residues D174–H177 carry the DEAH box motif. In terms of domain architecture, Helicase C-terminal spans L351 to Q513. Phosphoserine is present on residues S540, S607, S618, S628, and S636. Residues T601 to L635 are regulatory linker segment (RLS). The required for ATPase activity stretch occupies residues N615 to K673. 2 disordered regions span residues S628–R654 and L687–D711. A coiled-coil region spans residues E638 to A675. The span at D642–R654 shows a compositional bias: basic and acidic residues. Acidic residues predominate over residues E690–D711. Residues S704–P897 enclose the Macro domain. At S891 the chain carries Phosphoserine.

It belongs to the SNF2/RAD54 helicase family. In terms of assembly, interacts with nucleosomes; interacts with the acidic patch of histones. Interacts (via macro domain) with PARP1; interacts only when PARP1 is poly-ADP-ribosylated (PARylated). Interacts with CIAO1. Frequently overexpressed in hepatomacellular carcinomas.

The protein resides in the nucleus. The protein localises to the chromosome. The catalysed reaction is ATP + H2O = ADP + phosphate + H(+). Adopts an inactive conformation in absence of DNA damage. Binding to poly-ADP-ribosylated histones activates the ATP-dependent chromatin remodeler activity. ATP-dependent chromatin remodeler that mediates chromatin-remodeling following DNA damage. Recruited to DNA damage sites through interaction with poly-ADP-ribose: specifically recognizes and binds histones that are poly-ADP-ribosylated on serine residues in response to DNA damage. Poly-ADP-ribose-binding activates the ATP-dependent chromatin remodeler activity, thereby regulating chromatin during DNA repair. Catalyzes nucleosome sliding away from DNA breaks in an ATP-dependent manner. Chromatin remodeling activity promotes PARP2 removal from chromatin. The polypeptide is Chromodomain-helicase-DNA-binding protein 1-like (Homo sapiens (Human)).